A 427-amino-acid polypeptide reads, in one-letter code: Glycophorin-binding protein-related antigen (427 aa).

GBP repeat units follow at residues 109 to 149 (LTSA…DELE), 150 to 189 (TSADPEGQIMKAYAADPEYRKHLNVLYQILNNTDPNDEVE), 190 to 229 (SSADPEGQIMKAYAADPEYRKHVNVLYQILNNTDPNDELE), 230 to 269 (TSADPEGQIMKAYAADPEYRKHVNVLYQILNHTDSSEVET), 270 to 307 (SADPEGQIMKAYAADPEYRKHVNVLYQILNHTDSSEVE), 308 to 347 (TSADPEGQIMKAYAADPEYRKHVNVLYQILNNTDPNDELE), 348 to 387 (TSADPEGQIMKAYAADPEYRKHVNVLYQILNNTDPNDELE), and 388 to 427 (TSADPEGQIMKAYAADPEYRKHVNVLYQILNNTDPNDESS).

The chain is Glycophorin-binding protein-related antigen (GBPH) from Plasmodium falciparum (isolate FCBR / Columbia).